Here is a 118-residue protein sequence, read N- to C-terminus: Class II hydrophobin CRP (118 aa).

Positions 1–22 (MQFSIIAISFLASLAMASPAKR) are cleaved as a signal peptide. The tract at residues 20–46 (AKRGGGGGGSGSGSGSGSGSGSGGGST) is disordered. The span at 22–45 (RGGGGGGSGSGSGSGSGSGSGGGS) shows a compositional bias: gly residues. 7 tandem repeats follow at residues 29 to 30 (SG), 31 to 32 (SG), 33 to 34 (SG), 35 to 36 (SG), 37 to 38 (SG), 39 to 40 (SG), and 41 to 42 (SG). The 7 X 2 AA tandem repeats of S-G stretch occupies residues 29–42 (SGSGSGSGSGSGSG). Disulfide bonds link Cys-51–Cys-100, Cys-61–Cys-91, Cys-62–Cys-74, and Cys-101–Cys-112.

It belongs to the cerato-ulmin hydrophobin family. Homotetramer. Further self-assembles to form highly ordered films at water-air interfaces through intermolecular interactions.

Its subcellular location is the secreted. The protein localises to the cell wall. Aerial growth, conidiation, and dispersal of filamentous fungi in the environment rely upon a capability of their secreting small amphipathic proteins called hydrophobins (HPBs) with low sequence identity. Class I can self-assemble into an outermost layer of rodlet bundles on aerial cell surfaces, conferring cellular hydrophobicity that supports fungal growth, development and dispersal; whereas Class II form highly ordered films at water-air interfaces through intermolecular interactions but contribute nothing to the rodlet structure. Cryparin is a class II hydrophobin that is the most abundant protein produced by this fungus when grown in liquid culture and that plays an essential role in the fitness of this important plant pathogen by facilitating the eruption of the fungal fruiting bodies through the bark of its host tree. The sequence is that of Class II hydrophobin CRP from Cryphonectria parasitica (Chestnut blight fungus).